Here is a 286-residue protein sequence, read N- to C-terminus: ATP synthase gamma chain (286 aa).

This sequence belongs to the ATPase gamma chain family. F-type ATPases have 2 components, CF(1) - the catalytic core - and CF(0) - the membrane proton channel. CF(1) has five subunits: alpha(3), beta(3), gamma(1), delta(1), epsilon(1). CF(0) has three main subunits: a, b and c.

It localises to the cell membrane. Produces ATP from ADP in the presence of a proton gradient across the membrane. The gamma chain is believed to be important in regulating ATPase activity and the flow of protons through the CF(0) complex. This chain is ATP synthase gamma chain, found in Ureaplasma urealyticum serovar 10 (strain ATCC 33699 / Western).